A 472-amino-acid chain; its full sequence is UDP-glycosyltransferase 708G2 (472 aa).

His23 (proton acceptor) is an active-site residue. His23 serves as a coordination point for an anthocyanidin. Asp117 functions as the Charge relay in the catalytic mechanism. Residue Thr140 participates in UDP-alpha-D-glucose binding. The UDP stretch occupies residues 283-284; the sequence is SR. The UDP-alpha-D-glucose site is built by Val346, Gln348, His363, Trp366, Asn367, Ser368, and Glu371. An anthocyanidin is bound at residue Gly386. Residues Asp387 and Gln388 each coordinate UDP-alpha-D-glucose.

This sequence belongs to the UDP-glycosyltransferase family. In terms of tissue distribution, expressed at low levels in leaves, flowers and immature leaves.

It carries out the reaction a 3'-hydro-2'-hydroxy-beta-oxodihydrochalcone + UDP-alpha-D-glucose = a 3'-(beta-D-glucopyranosyl)-2'-hydroxy-beta-oxodihydrochalcone + UDP + H(+). UDP-glucose-dependent glucosyltransferase catalyzing the C-glucosylation of 2-hydroxyflavanones (2-hydroxylnaringenin and 2-hydroxypinocembrin) and phloretin. No activity with flavanones, flavones or flavonols. Exhibits C-glucosylation activity toward 2-phenyl-2',4',6'-trihydroxyacetophenone. Can use UDP-xylose as sugar donor, but catalytic efficiency is much lower toward UDP-xylose than toward UDP-glucose. The protein is UDP-glycosyltransferase 708G2 (UGT708G2) of Citrus unshiu (Satsuma mandarin).